The chain runs to 448 residues: N-succinylarginine dihydrolase (448 aa).

Substrate is bound by residues 19 to 28 (GGLSYGNVAS), asparagine 110, and 137 to 138 (HR). Glutamate 174 is an active-site residue. Arginine 214 is a substrate binding site. Residue histidine 250 is part of the active site. The substrate site is built by aspartate 252 and asparagine 365. The active-site Nucleophile is cysteine 371.

Belongs to the succinylarginine dihydrolase family. Homodimer.

The catalysed reaction is N(2)-succinyl-L-arginine + 2 H2O + 2 H(+) = N(2)-succinyl-L-ornithine + 2 NH4(+) + CO2. Its pathway is amino-acid degradation; L-arginine degradation via AST pathway; L-glutamate and succinate from L-arginine: step 2/5. Catalyzes the hydrolysis of N(2)-succinylarginine into N(2)-succinylornithine, ammonia and CO(2). The protein is N-succinylarginine dihydrolase of Pseudomonas aeruginosa (strain UCBPP-PA14).